The sequence spans 377 residues: MNDAIPRPQAKTRKALTPLLEIRNLTKSYDGQHAVDDVSLTIYKGEIFALLGASGCGKSTLLRMLAGFEQPSAGQIMLDGVDLSQVPPYLRPINMMFQSYALFPHMTVEQNIAFGLKQDKLPKAEIASRVNEMLGLVHMQEFAKRKPHQLSGGQRQRVALARSLAKRPKLLLLDEPMGALDKKLRDRMQLEVVDILERVGVTCVMVTHDQEEAMTMAGRIAIMNRGKFVQIGEPEEIYEHPTTRYSAEFIGSVNVFEGVLKERQEDGLVLDSPGLVHPLKVDADASVVDNVPVHVALRPEKIMLCEEPPANGCNFAVGEVIHIAYLGDLSVYHVRLKSGQMISAQLQNAHRHRKGLPTWGDEVRLCWEVDSCVVLTV.

The ABC transporter domain maps to 20–250 (LEIRNLTKSY…PTTRYSAEFI (231 aa)). Residue 52 to 59 (GASGCGKS) participates in ATP binding.

This sequence belongs to the ABC transporter superfamily. In terms of assembly, the complex is composed of two ATP-binding proteins (PotG), two transmembrane proteins (PotH and PotI) and a solute-binding protein (PotF).

It localises to the cell inner membrane. The enzyme catalyses putrescine(out) + ATP + H2O = putrescine(in) + ADP + phosphate + H(+). With respect to regulation, transport is feedback inhibited by intracellular polyamines. In terms of biological role, part of the ABC transporter complex PotFGHI involved in putrescine uptake. Responsible for energy coupling to the transport system. Imports putrescine for maintenance of the optimal concentration of polyamines necessary for cell growth in the presence of glucose. The sequence is that of Putrescine transport ATP-binding protein PotG from Escherichia coli (strain K12).